The following is a 477-amino-acid chain: Homeobox protein Meis2 (477 aa).

The tract at residues 71 to 191 (DALKRDKDAI…KMPIDLVIDE (121 aa)) is required for interaction with PBX1. One can recognise an MEIS N-terminal domain in the interval 110-193 (GGDVCSSDSF…PIDLVIDERD (84 aa)). Positions 193 to 203 (DGSSKSDHEEL) are enriched in basic and acidic residues. The interval 193-283 (DGSSKSDHEE…KKRQKKRGIF (91 aa)) is disordered. Composition is skewed to polar residues over residues 204–217 (SGSSTNLADHNPSS) and 239–251 (GHASQSGDNSSEQ). A DNA-binding region (homeobox; TALE-type) is located at residues 276–338 (RQKKRGIFPK…NARRRIVQPM (63 aa)). Residues 299 to 333 (LTHPYPSEEQKKQLAQDTGLTILQVNNWFINARRR) are interaction with DNA. The interval 340–477 (DQSNRAGFLL…GGQVMDIHAQ (138 aa)) is transcriptional activation domain.

The protein belongs to the TALE/MEIS homeobox family. Monomer and homodimer. Heterodimer with HOXB13. Isoform 2 interacts with TLX1. Isoform 3 interacts with HOXA13 and PBX1 isoform PBX1b. Isoform 4 interacts with SP1, SP3 and KLF4. Isoform 4 and isoform 5 interact with PBX1 isoform PBX1a; the interaction partially relieves MEIS2 autoinhibition. Isoform 3 also known as MEIS2b is part of a PDX1:PBX1b:Meis2B complex; Meis2B is recruited by PBX1b and can be replaced by isoform 4 in a small fraction of complexes. Can form trimeric complexes including HOXB8 and PBX2 or PBX3. In terms of tissue distribution, expressed in various tissues. Expressed at high level in the lymphoid organs of hematopoietic tissues. Also expressed in some regions of the brain, such as the putamen.

Its subcellular location is the nucleus. It localises to the cytoplasm. The protein localises to the perinuclear region. Functionally, involved in transcriptional regulation. Binds to HOX or PBX proteins to form dimers, or to a DNA-bound dimer of PBX and HOX proteins and thought to have a role in stabilization of the homeoprotein-DNA complex. Isoform 3 is required for the activity of a PDX1:PBX1b:MEIS2b complex in pancreatic acinar cells involved in the transcriptional activation of the ELA1 enhancer; the complex binds to the enhancer B element and cooperates with the transcription factor 1 complex (PTF1) bound to the enhancer A element; MEIS2 is not involved in complex DNA-binding. Probably in complex with PBX1, is involved in transcriptional regulation by KLF4. Isoform 3 and isoform 4 can bind to a EPHA8 promoter sequence containing the DNA motif 5'-CGGTCA-3'; in cooperation with a PBX protein (such as PBX2) is proposed to be involved in the transcriptional activation of EPHA8 in the developing midbrain. May be involved in regulation of myeloid differentiation. Can bind to the DNA sequence 5'-TGACAG-3'in the activator ACT sequence of the D(1A) dopamine receptor (DRD1) promoter and activate DRD1 transcription; isoform 5 cannot activate DRD1 transcription. This Homo sapiens (Human) protein is Homeobox protein Meis2 (MEIS2).